The sequence spans 536 residues: MKLTLWTYEGPPHVGAMRVATGMTGMHYVLHAPQGDTYADLLFTMIERRGKRPPVSYTTFQARDLGSDTAELFQSACRDAYERFQPQAIMVGSSCTAELIQDDTGGLADALSLPVPVVHLELPSYQRKENFGADESFLQICRKLARPMERTEKVSCNLLGPTALGFRHRDDILEVTRLLEGMGIAVNAVAPMGASPADIARLGAAHFNVLLYPETGESAARWAEKTLKQPYTKTVPIGVGATRDFVAEVAALAGVAPVADDSRLRQPWWSASVDSTYLTGKRVFLFGDATHVIAAARVARDEMGFEVVGMGCYNREFARPMRAAAKGYGLEALVTDDYLEVEEAIQALAPELILGTQMERHIAKRLGIPCAVISAPVHVQDFPARYSPQMGFEGANVLFDTWIHPLTMGLEEHLLTMFREDFEFHDEAGPSHHGGKAVPASAPRADEAAEALPATGAETAEGGSIPPEAVPPAAAAAAEAPAGEIVWLTDAERELKKIPFFVRGKARRNTEKFAAEKGLTRISIETLYEAKAHYAR.

Aspartate 36 contributes to the [4Fe-4S] cluster binding site. Residue aspartate 274 is the Proton donor of the active site. 409–410 serves as a coordination point for substrate; the sequence is GL. A disordered region spans residues 426-448; sequence DEAGPSHHGGKAVPASAPRADEA.

The protein belongs to the ChlB/BchB/BchZ family. Protochlorophyllide reductase is composed of three subunits; BchL, BchN and BchB. Forms a heterotetramer of two BchB and two BchN subunits. Requires [4Fe-4S] cluster as cofactor.

The catalysed reaction is chlorophyllide a + oxidized 2[4Fe-4S]-[ferredoxin] + 2 ADP + 2 phosphate = protochlorophyllide a + reduced 2[4Fe-4S]-[ferredoxin] + 2 ATP + 2 H2O. The protein operates within porphyrin-containing compound metabolism; bacteriochlorophyll biosynthesis (light-independent). Functionally, component of the dark-operative protochlorophyllide reductase (DPOR) that uses Mg-ATP and reduced ferredoxin to reduce ring D of protochlorophyllide (Pchlide) to form chlorophyllide a (Chlide). This reaction is light-independent. The NB-protein (BchN-BchB) is the catalytic component of the complex. In Cereibacter sphaeroides (strain KD131 / KCTC 12085) (Rhodobacter sphaeroides), this protein is Light-independent protochlorophyllide reductase subunit B.